The chain runs to 97 residues: Putative septation protein SpoVG (97 aa).

This sequence belongs to the SpoVG family.

Functionally, could be involved in septation. In Borreliella burgdorferi (strain ATCC 35210 / DSM 4680 / CIP 102532 / B31) (Borrelia burgdorferi), this protein is Putative septation protein SpoVG.